A 304-amino-acid polypeptide reads, in one-letter code: Recombination-associated protein RdgC (304 aa).

This sequence belongs to the RdgC family.

Its subcellular location is the cytoplasm. The protein resides in the nucleoid. Functionally, may be involved in recombination. The polypeptide is Recombination-associated protein RdgC (Shewanella baltica (strain OS185)).